A 119-amino-acid polypeptide reads, in one-letter code: Protein TusC (119 aa).

The protein belongs to the DsrF/TusC family. Heterohexamer, formed by a dimer of trimers. The hexameric TusBCD complex contains 2 copies each of TusB, TusC and TusD. The TusBCD complex interacts with TusE.

It is found in the cytoplasm. In terms of biological role, part of a sulfur-relay system required for 2-thiolation of 5-methylaminomethyl-2-thiouridine (mnm(5)s(2)U) at tRNA wobble positions. The chain is Protein TusC from Shigella sonnei (strain Ss046).